Reading from the N-terminus, the 184-residue chain is Ethylene-responsive transcription factor ERF024 (184 aa).

The disordered stretch occupies residues 1 to 21 (MQGTSKDNGGRHPLYRGVRQR). Positions 14–72 (LYRGVRQRKNSNKWVSEIREPRKPNRIWLGTFSTPEMAAIAYDVAALALKGSQAELNFP) form a DNA-binding region, AP2/ERF.

This sequence belongs to the AP2/ERF transcription factor family. ERF subfamily.

It is found in the nucleus. In terms of biological role, probably acts as a transcriptional activator. Binds to the GCC-box pathogenesis-related promoter element. May be involved in the regulation of gene expression by stress factors and by components of stress signal transduction pathways. This is Ethylene-responsive transcription factor ERF024 (ERF024) from Arabidopsis thaliana (Mouse-ear cress).